We begin with the raw amino-acid sequence, 543 residues long: ATP synthase subunit alpha (543 aa).

Residue 174–181 participates in ATP binding; it reads GDRQTGKT.

Belongs to the ATPase alpha/beta chains family. F-type ATPases have 2 components, CF(1) - the catalytic core - and CF(0) - the membrane proton channel. CF(1) has five subunits: alpha(3), beta(3), gamma(1), delta(1), epsilon(1). CF(0) has three main subunits: a(1), b(2) and c(9-12). The alpha and beta chains form an alternating ring which encloses part of the gamma chain. CF(1) is attached to CF(0) by a central stalk formed by the gamma and epsilon chains, while a peripheral stalk is formed by the delta and b chains.

It localises to the cell membrane. It catalyses the reaction ATP + H2O + 4 H(+)(in) = ADP + phosphate + 5 H(+)(out). Functionally, produces ATP from ADP in the presence of a proton gradient across the membrane. The alpha chain is a regulatory subunit. This Bifidobacterium longum subsp. infantis (strain ATCC 15697 / DSM 20088 / JCM 1222 / NCTC 11817 / S12) protein is ATP synthase subunit alpha.